Here is a 284-residue protein sequence, read N- to C-terminus: uncharacterized protein (284 aa).

An AB hydrolase-1 domain is found at P25 to T123. S96 is a catalytic residue.

This sequence belongs to the AB hydrolase superfamily.

This is an uncharacterized protein from Bacillus subtilis (strain 168).